Consider the following 291-residue polypeptide: Pituitary-specific positive transcription factor 1 (291 aa).

Residues 5–13 carry the 9aaTAD motif; the sequence is PFTSTDTFI. In terms of domain architecture, POU-specific spans 124-198; it reads MDSPEIRELE…ILFKWLEEAE (75 aa). The homeobox DNA-binding region spans 214–273; that stretch reads KRKRRTTISIAAKDALERHFGEQNKPSSQEILRMAEELNLEKEVVRVWFCNRRQREKRVK.

It belongs to the POU transcription factor family. Class-1 subfamily. In terms of assembly, interacts with PITX1. Interacts with LHX3. Interacts with ELK1.

It is found in the nucleus. Transcription factor involved in the specification of the lactotrope, somatotrope, and thyrotrope phenotypes in the developing anterior pituitary. Activates growth hormone and prolactin genes. Specifically binds to the consensus sequence 5'-TAAAT-3'. This Ovis aries (Sheep) protein is Pituitary-specific positive transcription factor 1 (POU1F1).